The following is a 256-amino-acid chain: Flap endonuclease Xni (256 aa).

Residue D105 coordinates Mg(2+). Residues 163–256 (RSQLIDYLAL…QFRIKKPDSE (94 aa)) enclose the 5'-3' exonuclease domain. Residues L172, A173, P181, V183, and I186 each contribute to the K(+) site. Residues 185–190 (GIGPKS) form an interaction with DNA region.

Belongs to the Xni family. It depends on Mg(2+) as a cofactor. K(+) serves as cofactor.

Its function is as follows. Has flap endonuclease activity. During DNA replication, flap endonucleases cleave the 5'-overhanging flap structure that is generated by displacement synthesis when DNA polymerase encounters the 5'-end of a downstream Okazaki fragment. This Shewanella pealeana (strain ATCC 700345 / ANG-SQ1) protein is Flap endonuclease Xni.